The sequence spans 389 residues: Chalcone synthase 1 (389 aa).

Cys164 is a catalytic residue.

This sequence belongs to the thiolase-like superfamily. Chalcone/stilbene synthases family.

The enzyme catalyses (E)-4-coumaroyl-CoA + 3 malonyl-CoA + 3 H(+) = 2',4,4',6'-tetrahydroxychalcone + 3 CO2 + 4 CoA. The protein operates within secondary metabolite biosynthesis; flavonoid biosynthesis. Its function is as follows. The primary product of this enzyme is 4,2',4',6'-tetrahydroxychalcone (also termed naringenin-chalcone or chalcone) which can under specific conditions spontaneously isomerize into naringenin. The polypeptide is Chalcone synthase 1 (CHS1) (Trifolium subterraneum (Subterranean clover)).